The sequence spans 451 residues: E3 ubiquitin-protein ligase trul-1 (451 aa).

The RING-type; atypical zinc finger occupies 13-54 (CSICFEDLKQNDKISAIVCGHIYHHGCISQWIATKRQCPSCR). 2 coiled-coil regions span residues 96 to 130 (LKVE…EKDK) and 209 to 243 (NKDL…DAAI). 2 disordered regions span residues 270-297 (RDVL…MIDP) and 389-442 (KIPN…SSTS). Residues 427 to 442 (STRISSFFSRTTSSTS) are compositionally biased toward low complexity.

Belongs to the TRAIP family.

The protein localises to the nucleus. The protein resides in the chromosome. It catalyses the reaction S-ubiquitinyl-[E2 ubiquitin-conjugating enzyme]-L-cysteine + [acceptor protein]-L-lysine = [E2 ubiquitin-conjugating enzyme]-L-cysteine + N(6)-ubiquitinyl-[acceptor protein]-L-lysine.. It participates in protein modification; protein ubiquitination. Its function is as follows. E3 ubiquitin ligase that acts as a key regulator of DNA repair in response to replication stress. Acts by mediating ubiquitination of the CMG helicase complex, promoting the unloading of the CMG helicase complex by the p97 ATPase (cdc-48.1 or cdc-48.2). This Caenorhabditis elegans protein is E3 ubiquitin-protein ligase trul-1.